The following is a 134-amino-acid chain: Flagellar basal-body rod protein FlgC (134 aa).

Belongs to the flagella basal body rod proteins family. The basal body constitutes a major portion of the flagellar organelle and consists of four rings (L,P,S, and M) mounted on a central rod. The rod consists of about 26 subunits of FlgG in the distal portion, and FlgB, FlgC and FlgF are thought to build up the proximal portion of the rod with about 6 subunits each.

It is found in the bacterial flagellum basal body. The chain is Flagellar basal-body rod protein FlgC (flgC) from Salmonella typhi.